The primary structure comprises 293 residues: Acetylglutamate kinase (293 aa).

Residues 68-69, Arg-90, and Asn-189 each bind substrate; that span reads GG.

This sequence belongs to the acetylglutamate kinase family. ArgB subfamily.

It is found in the cytoplasm. It carries out the reaction N-acetyl-L-glutamate + ATP = N-acetyl-L-glutamyl 5-phosphate + ADP. It functions in the pathway amino-acid biosynthesis; L-arginine biosynthesis; N(2)-acetyl-L-ornithine from L-glutamate: step 2/4. Functionally, catalyzes the ATP-dependent phosphorylation of N-acetyl-L-glutamate. In Mycobacterium ulcerans (strain Agy99), this protein is Acetylglutamate kinase.